The primary structure comprises 644 residues: Methionine--tRNA ligase (644 aa).

Positions 14 to 24 match the 'HIGH' region motif; it reads YYPSAKLHIGN. Zn(2+)-binding residues include Cys129, Cys132, Cys146, and Cys149. Residues 299–303 carry the 'KMSKS' region motif; that stretch reads KMSKS. Lys302 provides a ligand contact to ATP. Residues 542–644 enclose the tRNA-binding domain; the sequence is DVDKLDLRVV…EDIPTGSIVR (103 aa).

This sequence belongs to the class-I aminoacyl-tRNA synthetase family. MetG type 2A subfamily. In terms of assembly, homodimer. Zn(2+) is required as a cofactor.

The protein localises to the cytoplasm. The catalysed reaction is tRNA(Met) + L-methionine + ATP = L-methionyl-tRNA(Met) + AMP + diphosphate. In terms of biological role, is required not only for elongation of protein synthesis but also for the initiation of all mRNA translation through initiator tRNA(fMet) aminoacylation. This chain is Methionine--tRNA ligase (metG), found in Clostridium acetobutylicum (strain ATCC 824 / DSM 792 / JCM 1419 / IAM 19013 / LMG 5710 / NBRC 13948 / NRRL B-527 / VKM B-1787 / 2291 / W).